The sequence spans 160 residues: General odorant-binding protein 2 (160 aa).

Positions 1–19 (MGYKLLLMYIAIVIDSVIG) are cleaved as a signal peptide. 3 disulfide bridges follow: C38/C73, C69/C127, and C116/C136.

Belongs to the PBP/GOBP family. Antenna.

Functionally, present in the aqueous fluid surrounding olfactory sensory dendrites and are thought to aid in the capture and transport of hydrophobic odorants into and through this fluid. This is General odorant-binding protein 2 from Antheraea pernyi (Chinese oak silk moth).